Reading from the N-terminus, the 416-residue chain is MTSTLPSQPSASDLAVSSRPAAAGRFGRYGGQYVPETLMPALAELEQAAAQAWKDPAFTAELNRLLKSYVGRATPLYEAERLTEHYRRADGGPRIWLKREDLNHTGAHKINNALGQALLALRMGKKRVIAETGAGQHGVATATVCARFGLECVVYMGAEDMRRQALNVFRMRLLGATVHPVTAGTATLKDATSEAIRDWVTNVETTHYILGSVAGPHPYPMLVRDFHAVIGQETRQQCREAFGRLPDVLMACVGGGSNAMGLFHPFVECTDVRLIGVEAAGDGVATGRHAATITEGRVGVLHGAMSLLLQDQDGQVQEAHSISAGLDYPGVGPEHSYLREIGRAEYGAVTDAEALEALQLVSRLEGIIPALETAHAFAWLETLCPTLSAGTEVVLNCSGRGDKDVNTVAERLGDAL.

At Lys109 the chain carries N6-(pyridoxal phosphate)lysine.

This sequence belongs to the TrpB family. As to quaternary structure, tetramer of two alpha and two beta chains. Pyridoxal 5'-phosphate serves as cofactor.

The catalysed reaction is (1S,2R)-1-C-(indol-3-yl)glycerol 3-phosphate + L-serine = D-glyceraldehyde 3-phosphate + L-tryptophan + H2O. It functions in the pathway amino-acid biosynthesis; L-tryptophan biosynthesis; L-tryptophan from chorismate: step 5/5. The beta subunit is responsible for the synthesis of L-tryptophan from indole and L-serine. The sequence is that of Tryptophan synthase beta chain from Synechococcus sp. (strain WH7803).